A 130-amino-acid polypeptide reads, in one-letter code: Small ribosomal subunit protein uS9 (130 aa).

Belongs to the universal ribosomal protein uS9 family.

This is Small ribosomal subunit protein uS9 from Methylibium petroleiphilum (strain ATCC BAA-1232 / LMG 22953 / PM1).